The following is a 231-amino-acid chain: Lipoprotein-releasing system ATP-binding protein LolD (231 aa).

Residues 6-230 (LSCKNVSKKY…DGELELVINS (225 aa)) form the ABC transporter domain. 42 to 49 (GLSGSGKT) contributes to the ATP binding site.

This sequence belongs to the ABC transporter superfamily. Lipoprotein translocase (TC 3.A.1.125) family. The complex is composed of two ATP-binding proteins (LolD) and two transmembrane proteins (LolC and LolE).

The protein localises to the cell inner membrane. Its function is as follows. Part of the ABC transporter complex LolCDE involved in the translocation of mature outer membrane-directed lipoproteins, from the inner membrane to the periplasmic chaperone, LolA. Responsible for the formation of the LolA-lipoprotein complex in an ATP-dependent manner. The chain is Lipoprotein-releasing system ATP-binding protein LolD from Francisella tularensis subsp. holarctica (strain OSU18).